A 90-amino-acid polypeptide reads, in one-letter code: Putative regulatory protein Cbei_1140 (90 aa).

Belongs to the RemA family.

This is Putative regulatory protein Cbei_1140 from Clostridium beijerinckii (strain ATCC 51743 / NCIMB 8052) (Clostridium acetobutylicum).